The primary structure comprises 525 residues: M-phase inducer phosphatase 1 (525 aa).

Residues 1 to 42 are disordered; sequence MELGPEPPHRRRLLFTCSPTPAPQPTGKVQFGASRAGGLSPV. The Phosphodegron signature appears at 74–84; the sequence is MGSSESTDSGF. Ser76 carries the post-translational modification Phosphoserine; by CHEK1. Ser79, Ser82, and Ser88 each carry phosphoserine; by NEK11. Ser124 bears the Phosphoserine; by CHEK1 and CHEK2 mark. The KEN box signature appears at 141 to 143; it reads KEN. Ser178 bears the Phosphoserine; by CHEK1 mark. Residues 260-318 are disordered; the sequence is FDSPSPCSSTSSCSTRAVKRADRSHEESPRGTKRRKSSEASPVKADVPEPTQLPHQSLS. Residues 262–274 are compositionally biased toward low complexity; that stretch reads SPSPCSSTSSCST. The segment covering 278-289 has biased composition (basic and acidic residues); the sequence is KRADRSHEESPR. Phosphoserine; by CHEK1 and CHEK2 occurs at positions 283 and 296. In terms of domain architecture, Rhodanese spans 377 to 483; that stretch reads LIKEFVIIDC…FFLKCQSHCE (107 aa). Residue Cys432 is part of the active site. Thr508 carries the phosphothreonine; by CHEK1 modification. 2 positions are modified to phosphoserine; by PLK3: Ser514 and Ser520.

It belongs to the MPI phosphatase family. Interacts with CCNB1/cyclin B1. Interacts with YWHAE/14-3-3 epsilon when phosphorylated. Interacts with CUL1 specifically when CUL1 is neddylated and active. Interacts with BTRC/BTRCP1 and FBXW11/BTRCP2. Interactions with CUL1, BTRC and FBXW11 are enhanced upon DNA damage. Interacts with CHEK2; mediates CDC25A phosphorylation and degradation in response to infrared-induced DNA damages. Interacts with HSP90AB1; prevents heat shock-mediated CDC25A degradation and contributes to cell cycle progression. In terms of processing, phosphorylated by CHEK1 on Ser-76, Ser-124, Ser-178, Ser-283, Ser-296 and Thr-508 during checkpoint mediated cell cycle arrest. Also phosphorylated by CHEK2 on Ser-124, Ser-283, and Ser-296 during checkpoint mediated cell cycle arrest. Phosphorylation on Ser-178 and Thr-508 creates binding sites for YWHAE/14-3-3 epsilon which inhibits CDC25A. Phosphorylation on Ser-76, Ser-124, Ser-178, Ser-283 and Ser-296 may also promote ubiquitin-dependent proteolysis of CDC25A by the SCF complex. Phosphorylation of CDC25A at Ser-76 by CHEK1 primes it for subsequent phosphorylation at Ser-79, Ser-82 and Ser-88 by NEK11. Phosphorylation by NEK11 is required for BTRC-mediated polyubiquitination and degradation. Phosphorylation by PIM1 leads to an increase in phosphatase activity. Phosphorylated by PLK3 following DNA damage, leading to promote its ubiquitination and degradation. Ubiquitinated by the anaphase promoting complex/cyclosome (APC/C) ubiquitin ligase complex that contains FZR1/CDH1 during G1 phase leading to its degradation by the proteasome. Ubiquitinated by a SCF complex containing BTRC and FBXW11 during S phase leading to its degradation by the proteasome. Deubiquitination by USP17L2/DUB3 leads to its stabilization.

The enzyme catalyses O-phospho-L-tyrosyl-[protein] + H2O = L-tyrosyl-[protein] + phosphate. Its activity is regulated as follows. Stimulated by B-type cyclins. Stimulated by PIM1-mediated phosphorylation. Tyrosine protein phosphatase which functions as a dosage-dependent inducer of mitotic progression. Directly dephosphorylates CDK1 and stimulates its kinase activity. Also dephosphorylates CDK2 in complex with cyclin-E, in vitro. This is M-phase inducer phosphatase 1 (Cdc25a) from Rattus norvegicus (Rat).